Consider the following 116-residue polypeptide: Ribonuclease P protein component (116 aa).

It belongs to the RnpA family. Consists of a catalytic RNA component (M1 or rnpB) and a protein subunit.

It catalyses the reaction Endonucleolytic cleavage of RNA, removing 5'-extranucleotides from tRNA precursor.. Functionally, RNaseP catalyzes the removal of the 5'-leader sequence from pre-tRNA to produce the mature 5'-terminus. It can also cleave other RNA substrates such as 4.5S RNA. The protein component plays an auxiliary but essential role in vivo by binding to the 5'-leader sequence and broadening the substrate specificity of the ribozyme. This Mycobacterium bovis (strain ATCC BAA-935 / AF2122/97) protein is Ribonuclease P protein component.